A 440-amino-acid polypeptide reads, in one-letter code: Glycerophosphocholine cholinephosphodiesterase ENPP6 (440 aa).

The N-terminal stretch at 1–22 (MAGKLWTFLLLFGFSWVWPASA) is a signal peptide. Positions 32, 71, and 92 each coordinate substrate. Residues D32 and S71 each contribute to the Zn(2+) site. Catalysis depends on S71, which acts as the Nucleophile. S71 is modified (phosphoserine). Residues N100 and N118 are each glycosylated (N-linked (GlcNAc...) asparagine). The cysteines at positions 142 and 154 are disulfide-linked. Substrate is bound at residue D193. The Zn(2+) site is built by D193, H197, D240, and H241. Position 241 (H241) interacts with substrate. Residue N341 is glycosylated (N-linked (GlcNAc...) asparagine). Residue H354 participates in substrate binding. Residue H354 participates in Zn(2+) binding. An N-linked (GlcNAc...) asparagine glycan is attached at N404. S419 carries GPI-anchor amidated serine lipidation. Positions 420–440 (SSPSIPPNSCALVLILLLYFV) are cleaved as a propeptide — removed in mature form.

Belongs to the nucleotide pyrophosphatase/phosphodiesterase family. Homodimer; disulfide-linked. Homotetramer. It depends on Zn(2+) as a cofactor.

The protein localises to the cell membrane. It carries out the reaction sn-glycerol 3-phosphocholine + H2O = phosphocholine + glycerol + H(+). The catalysed reaction is a 1-acyl-sn-glycero-3-phosphocholine + H2O = a 1-acyl-sn-glycerol + phosphocholine + H(+). It catalyses the reaction a 1-O-alkyl-sn-glycero-3-phosphocholine + H2O = a 1-O-alkyl-sn-glycerol + phosphocholine + H(+). The enzyme catalyses 1-dodecanoyl-sn-glycero-3-phosphocholine + H2O = 1-dodecanoyl-sn-glycerol + phosphocholine + H(+). It carries out the reaction 1-hexadecanoyl-sn-glycero-3-phosphocholine + H2O = 1-hexadecanoyl-sn-glycerol + phosphocholine + H(+). The catalysed reaction is 1-(5Z,8Z,11Z,14Z-eicosatetraenoyl)-sn-glycero-3-phosphocholine + H2O = 1-(5Z,8Z,11Z,14Z-eicosatetraenoyl)-sn-glycerol + phosphocholine + H(+). It catalyses the reaction 1-tetradecanoyl-sn-glycero-3-phosphocholine + H2O = 1-tetradecanoyl-sn-glycerol + phosphocholine + H(+). The enzyme catalyses sphing-4-enine-phosphocholine + H2O = sphing-4-enine + phosphocholine + H(+). It carries out the reaction 1-(9Z-octadecenoyl)-sn-glycero-3-phosphocholine + H2O = 1-(9Z-octadecenoyl)-sn-glycerol + phosphocholine + H(+). The catalysed reaction is 1-(9Z,12Z)-octadecadienoyl-sn-glycero-3-phosphocholine + H2O = 1-(9Z,12Z-octadecadienoyl)-sn-glycerol + phosphocholine + H(+). It catalyses the reaction glycero-2-phosphocholine + H2O = phosphocholine + glycerol + H(+). Inhibited by EDTA and EGTA in vitro. Choline-specific glycerophosphodiesterase that hydrolyzes glycerophosphocholine (GPC) and lysophosphatidylcholine (LPC) and contributes to supplying choline to the cells. Has a preference for LPC with short (12:0 and 14:0) or polyunsaturated (18:2 and 20:4) fatty acids. In vitro, hydrolyzes only choline-containing lysophospholipids, such as sphingosylphosphorylcholine (SPC), platelet-activating factor (PAF) and lysoPAF, but not other lysophospholipids. The protein is Glycerophosphocholine cholinephosphodiesterase ENPP6 of Rattus norvegicus (Rat).